The sequence spans 217 residues: Deoxyribose-phosphate aldolase 1 (217 aa).

The Proton donor/acceptor role is filled by Asp-89. Lys-151 (schiff-base intermediate with acetaldehyde) is an active-site residue. The active-site Proton donor/acceptor is the Lys-180.

The protein belongs to the DeoC/FbaB aldolase family. DeoC type 1 subfamily.

The protein resides in the cytoplasm. It carries out the reaction 2-deoxy-D-ribose 5-phosphate = D-glyceraldehyde 3-phosphate + acetaldehyde. The protein operates within carbohydrate degradation; 2-deoxy-D-ribose 1-phosphate degradation; D-glyceraldehyde 3-phosphate and acetaldehyde from 2-deoxy-alpha-D-ribose 1-phosphate: step 2/2. Functionally, catalyzes a reversible aldol reaction between acetaldehyde and D-glyceraldehyde 3-phosphate to generate 2-deoxy-D-ribose 5-phosphate. This is Deoxyribose-phosphate aldolase 1 from Cutibacterium acnes (strain DSM 16379 / KPA171202) (Propionibacterium acnes).